Here is a 298-residue protein sequence, read N- to C-terminus: Porphobilinogen deaminase (298 aa).

Position 239 is an S-(dipyrrolylmethanemethyl)cysteine (Cys-239).

This sequence belongs to the HMBS family. Monomer. Dipyrromethane serves as cofactor.

It carries out the reaction 4 porphobilinogen + H2O = hydroxymethylbilane + 4 NH4(+). It functions in the pathway porphyrin-containing compound metabolism; protoporphyrin-IX biosynthesis; coproporphyrinogen-III from 5-aminolevulinate: step 2/4. In terms of biological role, tetrapolymerization of the monopyrrole PBG into the hydroxymethylbilane pre-uroporphyrinogen in several discrete steps. The chain is Porphobilinogen deaminase from Ehrlichia chaffeensis (strain ATCC CRL-10679 / Arkansas).